A 596-amino-acid polypeptide reads, in one-letter code: Nitrite reductase (596 aa).

A signal peptide spans 1-29 (MRQRTPFARPGLLASAALALVLGPLAVAA). The segment at 30–76 (QEQAAPPKDPAAALEDHKTKTDNRYEPSLDNLAQQDVAALGAPEGIP) is N-terminal tail. Histidine 46 is a binding site for heme c. The heme d1 site is built by tyrosine 54 and serine 57. The 86-residue stretch at 77 to 162 (ALSDAQYNEA…ANYLLLDPAA (86 aa)) folds into the Cytochrome c domain. Heme c contacts are provided by cysteine 94, cysteine 97, histidine 98, lysine 108, and tyrosine 122. Residues tryptophan 138, arginine 203, histidine 229, arginine 232, arginine 245, arginine 272, tyrosine 292, arginine 420, glutamine 536, and threonine 583 each contribute to the heme d1 site. A D1-heme domain region spans residues 163-596 (PPEFGMKEMR…NVYNTMTDTY (434 aa)).

Homodimer. The cofactor is heme c. Requires heme as cofactor.

The protein resides in the periplasm. The enzyme catalyses nitric oxide + Fe(III)-[cytochrome c] + H2O = Fe(II)-[cytochrome c] + nitrite + 2 H(+). It carries out the reaction A + NH4(+) + H2O = hydroxylamine + AH2 + H(+). Its function is as follows. Inactivation of this cytochrome oxidase results in the loss of nitrite and nitric oxide reductase activities, but not of nitrous oxide reductase activity. This chain is Nitrite reductase (nirS), found in Paracoccus denitrificans (strain Pd 1222).